The following is a 344-amino-acid chain: tRNA N6-adenosine threonylcarbamoyltransferase (344 aa).

Fe cation contacts are provided by histidine 111 and histidine 115. Residues 134 to 138, aspartate 167, glycine 180, and asparagine 273 each bind substrate; that span reads LVSGG. Residue aspartate 301 coordinates Fe cation.

The protein belongs to the KAE1 / TsaD family. It depends on Fe(2+) as a cofactor.

Its subcellular location is the cytoplasm. It carries out the reaction L-threonylcarbamoyladenylate + adenosine(37) in tRNA = N(6)-L-threonylcarbamoyladenosine(37) in tRNA + AMP + H(+). Required for the formation of a threonylcarbamoyl group on adenosine at position 37 (t(6)A37) in tRNAs that read codons beginning with adenine. Is involved in the transfer of the threonylcarbamoyl moiety of threonylcarbamoyl-AMP (TC-AMP) to the N6 group of A37, together with TsaE and TsaB. TsaD likely plays a direct catalytic role in this reaction. The protein is tRNA N6-adenosine threonylcarbamoyltransferase of Cupriavidus taiwanensis (strain DSM 17343 / BCRC 17206 / CCUG 44338 / CIP 107171 / LMG 19424 / R1) (Ralstonia taiwanensis (strain LMG 19424)).